A 157-amino-acid polypeptide reads, in one-letter code: Phosphopantetheine adenylyltransferase (157 aa).

It belongs to the eukaryotic CoaD family. As to quaternary structure, monomer.

It localises to the cytoplasm. The enzyme catalyses (R)-4'-phosphopantetheine + ATP + H(+) = 3'-dephospho-CoA + diphosphate. Its pathway is cofactor biosynthesis; coenzyme A biosynthesis. Reversibly transfers an adenylyl group from ATP to 4'-phosphopantetheine, yielding dephospho-CoA (dPCoA) and pyrophosphate. The polypeptide is Phosphopantetheine adenylyltransferase (Pyrococcus abyssi (strain GE5 / Orsay)).